We begin with the raw amino-acid sequence, 392 residues long: S-adenosylmethionine synthase (392 aa).

Position 20 (His20) interacts with ATP. Residue Asp22 coordinates Mg(2+). Residue Glu48 coordinates K(+). 2 residues coordinate L-methionine: Glu61 and Gln106. The tract at residues 106 to 116 (QSRDIINAIEK) is flexible loop. ATP-binding positions include 171-173 (DSK), Asp248, 254-255 (RK), Ala271, and Lys275. Residue Asp248 participates in L-methionine binding. Lys279 is an L-methionine binding site.

Belongs to the AdoMet synthase family. Homotetramer; dimer of dimers. Mg(2+) is required as a cofactor. It depends on K(+) as a cofactor.

The protein resides in the cytoplasm. It carries out the reaction L-methionine + ATP + H2O = S-adenosyl-L-methionine + phosphate + diphosphate. It functions in the pathway amino-acid biosynthesis; S-adenosyl-L-methionine biosynthesis; S-adenosyl-L-methionine from L-methionine: step 1/1. In terms of biological role, catalyzes the formation of S-adenosylmethionine (AdoMet) from methionine and ATP. The overall synthetic reaction is composed of two sequential steps, AdoMet formation and the subsequent tripolyphosphate hydrolysis which occurs prior to release of AdoMet from the enzyme. This chain is S-adenosylmethionine synthase, found in Borreliella afzelii (strain PKo) (Borrelia afzelii).